The following is a 204-amino-acid chain: uncharacterized protein (204 aa).

The first 21 residues, 1–21 (MIKKFLLFAMLNIFLTNKAHS), serve as a signal peptide directing secretion.

This is an uncharacterized protein from Borreliella burgdorferi (strain ATCC 35210 / DSM 4680 / CIP 102532 / B31) (Borrelia burgdorferi).